The primary structure comprises 430 residues: MQIIKTTIATFTAIAFTGAASFTSAEVVPLDRVVAVVDNRAITQTELDSRVQDVQVRSQAAGMRLPEADILNKQIIDQLISETLQLEMADRYGVQVSDQEVNASIGNIIQNAQMTEQQFVQQLASEGVSINEFRASIRRQLTMRSITEGLVSRRIRISEQEVDNFLKSADAQFWVSPDYHLGHILVALPSSPSSEAIVEAEEKANALYEKLKAGANFAEVAIAESNGPSALQGGDLGWRKSAELPTLFAELLPSLNNGDVTKPTRSQAGFHIIKLYESRGGQKQIVNQTRARHILVKTSEILNDAKAEAKLKDIRQQILDGADFAELAKTHSEDIGSRMSGGDLGWATPGTFVPAFEKTMAETKEGEISQPFKSRFGWHIMKVEERREEDMTQEALRQKARNMIMSRRFEDETQIWLQELRDEAFIDIKI.

The signal sequence occupies residues 1–25; it reads MQIIKTTIATFTAIAFTGAASFTSA. 2 PpiC domains span residues 176–277 and 286–385; these read SPDY…KLYE and VNQT…KVEE.

Its subcellular location is the periplasm. It carries out the reaction [protein]-peptidylproline (omega=180) = [protein]-peptidylproline (omega=0). Its function is as follows. Chaperone involved in the correct folding and assembly of outer membrane proteins. Recognizes specific patterns of aromatic residues and the orientation of their side chains, which are found more frequently in integral outer membrane proteins. May act in both early periplasmic and late outer membrane-associated steps of protein maturation. The chain is Chaperone SurA from Saccharophagus degradans (strain 2-40 / ATCC 43961 / DSM 17024).